Reading from the N-terminus, the 115-residue chain is DNA-directed RNA polymerase subunit Rpo4 (115 aa).

This sequence belongs to the eukaryotic RPB4 RNA polymerase subunit family. Part of the RNA polymerase complex. Forms a stalk with Rpo7 that extends from the main structure.

It localises to the cytoplasm. The catalysed reaction is RNA(n) + a ribonucleoside 5'-triphosphate = RNA(n+1) + diphosphate. In terms of biological role, DNA-dependent RNA polymerase (RNAP) catalyzes the transcription of DNA into RNA using the four ribonucleoside triphosphates as substrates. This subunit is less well bound than the others. The protein is DNA-directed RNA polymerase subunit Rpo4 of Methanocaldococcus jannaschii (strain ATCC 43067 / DSM 2661 / JAL-1 / JCM 10045 / NBRC 100440) (Methanococcus jannaschii).